We begin with the raw amino-acid sequence, 226 residues long: UPF0177 protein YbdJ (226 aa).

Transmembrane regions (helical) follow at residues 16–36 (LLLL…LGIF), 43–63 (FAFN…IVIA), 81–101 (LLFI…AHHL), 169–189 (FAWV…ISLV), and 206–226 (LHSS…FWVF).

It belongs to the UPF0177 family.

The protein localises to the cell membrane. In Lactococcus lactis subsp. lactis (strain IL1403) (Streptococcus lactis), this protein is UPF0177 protein YbdJ (ybdJ).